A 190-amino-acid chain; its full sequence is MSIKEDKWIRKMALAHGMIEPFADGQVNLNPETGEKLISYGLSSYGYDLRLSREFKVFTNVYNSLVDPKRFTEDTFISITDDVCIIPPNSFALAHSVEYFRIPRNVLTMCIGKSTYARCGLIVNVTPFEPEWEGYVTIEISNTTPLPAKIYANEGIAQVLFFEADEICEVSYAERKGKYQKQQGITVPFV.

Residue 113-118 (KSTYAR) coordinates dCTP. The active-site Proton donor/acceptor is the E139. The dCTP site is built by Q158, Y172, K181, and Q182.

It belongs to the dCTP deaminase family. Homotrimer.

The enzyme catalyses dCTP + H2O + H(+) = dUTP + NH4(+). Its pathway is pyrimidine metabolism; dUMP biosynthesis; dUMP from dCTP (dUTP route): step 1/2. Catalyzes the deamination of dCTP to dUTP. The polypeptide is dCTP deaminase (Chlamydia abortus (strain DSM 27085 / S26/3) (Chlamydophila abortus)).